Reading from the N-terminus, the 344-residue chain is Phosphoribosylformylglycinamidine cyclo-ligase (344 aa).

It belongs to the AIR synthase family.

It localises to the cytoplasm. It catalyses the reaction 2-formamido-N(1)-(5-O-phospho-beta-D-ribosyl)acetamidine + ATP = 5-amino-1-(5-phospho-beta-D-ribosyl)imidazole + ADP + phosphate + H(+). It functions in the pathway purine metabolism; IMP biosynthesis via de novo pathway; 5-amino-1-(5-phospho-D-ribosyl)imidazole from N(2)-formyl-N(1)-(5-phospho-D-ribosyl)glycinamide: step 2/2. In Synechococcus sp. (strain RCC307), this protein is Phosphoribosylformylglycinamidine cyclo-ligase.